The following is a 589-amino-acid chain: Transmembrane 9 superfamily member 1 (589 aa).

An N-terminal signal peptide occupies residues 1–24; it reads MPSSSSAAVLVFLLLVSLLTPTFA. Topologically, residues 25-222 are lumenal; the sequence is SDSDHKYQAE…YPFFEHQIHW (198 aa). The chain crosses the membrane as a helical span at residues 223–243; that stretch reads FSIFNSFMMVIFLTGLVSMIL. At 244-293 the chain is on the cytoplasmic side; it reads MRTLRNDYAKYAREDDDLESLERDVSEESGWKLVHGDVFRPASSLVLLSA. A helical transmembrane segment spans residues 294–314; it reads VVGTGAQLALLVLLVILMAIV. At 315–321 the chain is on the lumenal side; the sequence is GTLYVGR. Residues 322-342 form a helical membrane-spanning segment; the sequence is GAIVTTFIVCYALTSFVSGYV. Over 343–364 the chain is Cytoplasmic; that stretch reads SGGMYSRSGGKHWIKCMVLTAS. A helical transmembrane segment spans residues 365–385; sequence LFPFLCFGIGFLLNTIAIFYG. The Lumenal segment spans residues 386 to 395; the sequence is SLAAIPFGTM. The chain crosses the membrane as a helical span at residues 396–416; that stretch reads VVVFVIWGFISFPLALLGTVV. At 417 to 448 the chain is on the cytoplasmic side; sequence GRNWSGAPNNPCRVKTIPRPIPEKKWYLTPSV. The chain crosses the membrane as a helical span at residues 449–469; the sequence is VSLMGGLLPFGSIFIEMYFVF. Residues 470-481 are Lumenal-facing; sequence TSFWNYKVYYVY. The helical transmembrane segment at 482–502 threads the bilayer; that stretch reads GFMLLVFVILVIVTVCVTIVG. Residues 503–518 lie on the Cytoplasmic side of the membrane; sequence TYFLLNAENYHWQWTS. Residues 519-539 traverse the membrane as a helical segment; the sequence is FFSAASTAVYVYLYSIYYYYV. The Lumenal portion of the chain corresponds to 540–550; sequence KTKMSGFFQTS. A helical membrane pass occupies residues 551-571; sequence FYFGYTMMFCLGLGILCGAVG. Over 572–589 the chain is Cytoplasmic; it reads YLGSNLFVRRIYRNIKCD. Residues 578-583 carry the Endoplasmic reticulum export signal motif; it reads FVRRIY. The Golgi retention signal motif lies at 587-589; it reads KCD.

The protein belongs to the nonaspanin (TM9SF) (TC 9.A.2) family. As to expression, ubiquitous.

It is found in the endosome membrane. The protein resides in the golgi apparatus membrane. The protein is Transmembrane 9 superfamily member 1 of Arabidopsis thaliana (Mouse-ear cress).